The chain runs to 81 residues: Photosystem I iron-sulfur center (81 aa).

2 consecutive 4Fe-4S ferredoxin-type domains span residues 2–31 (SHAVKIYDTCIGCTQCVRACPLDVLEMVPW) and 39–68 (IAASPRTEDCVGCKRCETACPTHFLSIRVY). 8 residues coordinate [4Fe-4S] cluster: cysteine 11, cysteine 14, cysteine 17, cysteine 21, cysteine 48, cysteine 51, cysteine 54, and cysteine 58.

As to quaternary structure, the cyanobacterial PSI reaction center is composed of one copy each of PsaA,B,C,D,E,F,I,J,K,L,M and X, and forms trimeric complexes. Requires [4Fe-4S] cluster as cofactor.

It is found in the cellular thylakoid membrane. It carries out the reaction reduced [plastocyanin] + hnu + oxidized [2Fe-2S]-[ferredoxin] = oxidized [plastocyanin] + reduced [2Fe-2S]-[ferredoxin]. Apoprotein for the two 4Fe-4S centers FA and FB of photosystem I (PSI); essential for photochemical activity. FB is the terminal electron acceptor of PSI, donating electrons to ferredoxin. The C-terminus interacts with PsaA/B/D and helps assemble the protein into the PSI complex. Required for binding of PsaD and PsaE to PSI. PSI is a plastocyanin/cytochrome c6-ferredoxin oxidoreductase, converting photonic excitation into a charge separation, which transfers an electron from the donor P700 chlorophyll pair to the spectroscopically characterized acceptors A0, A1, FX, FA and FB in turn. In Prochlorococcus marinus (strain MIT 9313), this protein is Photosystem I iron-sulfur center.